The primary structure comprises 313 residues: Olfactory receptor 1D2 (313 aa).

Topologically, residues 1-25 (MDGGNQSEGSEFLLLGMSESPEQQR) are extracellular. The N-linked (GlcNAc...) asparagine glycan is linked to asparagine 5. The chain crosses the membrane as a helical span at residues 26-49 (ILFWMFLSMYLVTVLGNVLIILAI). The Cytoplasmic portion of the chain corresponds to 50–57 (SSDSRLHT). A helical membrane pass occupies residues 58 to 79 (PMYFFLANLSFTDLFFVTNTIP). Residues 80-100 (KMLVNLQSQDKAISYAGCLTQ) are Extracellular-facing. A disulfide bridge links cysteine 97 with cysteine 189. Residues 101–120 (LYFLLSLVTLDNLILAVMAY) traverse the membrane as a helical segment. Residues 121-139 (DRYVAICCPLHYVTAMSPR) are Cytoplasmic-facing. The chain crosses the membrane as a helical span at residues 140-158 (LCILLLSLCWVFSVLYGLI). The Extracellular portion of the chain corresponds to 159–196 (HTLLMTRVTFCGSRKIHYLFCEMYFLLRLACSNIQINH). N-linked (GlcNAc...) asparagine glycosylation is present at asparagine 195. The chain crosses the membrane as a helical span at residues 197 to 219 (TVLXATGCFIFLIPLGFMIXSYA). The Cytoplasmic portion of the chain corresponds to 220-236 (RIVRAILRIPSATGKYK). Residues 237 to 259 (AFSTCASHLAVVSLFYGTLGMVY) form a helical membrane-spanning segment. Residues 260–271 (LQPLQTYSTKDS) are Extracellular-facing. The helical transmembrane segment at 272-291 (VATVMYAVVTPMMNPFIYSL) threads the bilayer. Topologically, residues 292–313 (RNKDIHGALGRLLQGKAFQKLT) are cytoplasmic.

It belongs to the G-protein coupled receptor 1 family.

The protein localises to the cell membrane. Its function is as follows. Odorant receptor. This is Olfactory receptor 1D2 (OR1D2) from Pongo pygmaeus (Bornean orangutan).